A 465-amino-acid polypeptide reads, in one-letter code: MGRTLAEKVWDAHVVRRADGEPDLLYIDLHLVHEVTSPQAFEALRLAGRPVRRPELTLATEDHNVPTTDTLAPIADPISAAQVEALRKNCAEFGVRLYPMNDPGQGIVHVVGPQLGLSQPGMTIVCGDSHTSTHGAFGALAFGIGTSQVEHVLATQTLPQRRPKTMAITVAGDLPVGVSAKDLILAIIARIGTGGGAGHVIEYRGAAIRALSMEGRMTVCNMSIEAGARAGMIAPDDVTFEYLAGRPRVATGAAWEEAVAYWRTLASDSDAVFDREVVIDAASLTPYVTWGTNPGQAAPLGSLVPAPADYPDAAARASVERALTYMGLTPGTPLSDVTVDTVFIGSCTNGRLSDLRAAADVLRGRRVSEGVRVLIVPGSMAVKAQAEAEGLDEVFRAAGAQWRSAGCSMCLGMNPDTLRPGERSASTSNRNFEGRQGPGGRTHLVSPAVAAATAVTGRLTAPADL.

[4Fe-4S] cluster is bound by residues cysteine 347, cysteine 407, and cysteine 410. The tract at residues 416–443 (DTLRPGERSASTSNRNFEGRQGPGGRTH) is disordered.

Belongs to the aconitase/IPM isomerase family. LeuC type 1 subfamily. As to quaternary structure, heterodimer of LeuC and LeuD. [4Fe-4S] cluster is required as a cofactor.

The catalysed reaction is (2R,3S)-3-isopropylmalate = (2S)-2-isopropylmalate. Its pathway is amino-acid biosynthesis; L-leucine biosynthesis; L-leucine from 3-methyl-2-oxobutanoate: step 2/4. Catalyzes the isomerization between 2-isopropylmalate and 3-isopropylmalate, via the formation of 2-isopropylmaleate. In Frankia casuarinae (strain DSM 45818 / CECT 9043 / HFP020203 / CcI3), this protein is 3-isopropylmalate dehydratase large subunit.